The primary structure comprises 485 residues: Glutamyl-tRNA(Gln) amidotransferase subunit A (485 aa).

Catalysis depends on charge relay system residues lysine 78 and serine 153. Serine 177 (acyl-ester intermediate) is an active-site residue.

The protein belongs to the amidase family. GatA subfamily. Heterotrimer of A, B and C subunits.

It carries out the reaction L-glutamyl-tRNA(Gln) + L-glutamine + ATP + H2O = L-glutaminyl-tRNA(Gln) + L-glutamate + ADP + phosphate + H(+). Allows the formation of correctly charged Gln-tRNA(Gln) through the transamidation of misacylated Glu-tRNA(Gln) in organisms which lack glutaminyl-tRNA synthetase. The reaction takes place in the presence of glutamine and ATP through an activated gamma-phospho-Glu-tRNA(Gln). In Geobacter sp. (strain M21), this protein is Glutamyl-tRNA(Gln) amidotransferase subunit A.